The following is a 279-amino-acid chain: Pantothenate synthetase (279 aa).

30–37 (MGALHAGH) is an ATP binding site. Histidine 37 acts as the Proton donor in catalysis. A (R)-pantoate-binding site is contributed by glutamine 61. Residue glutamine 61 participates in beta-alanine binding. 147–150 (GEKD) contributes to the ATP binding site. Glutamine 153 serves as a coordination point for (R)-pantoate. ATP contacts are provided by residues alanine 176 and 184–187 (LSSR).

It belongs to the pantothenate synthetase family. As to quaternary structure, homodimer.

It is found in the cytoplasm. The enzyme catalyses (R)-pantoate + beta-alanine + ATP = (R)-pantothenate + AMP + diphosphate + H(+). Its pathway is cofactor biosynthesis; (R)-pantothenate biosynthesis; (R)-pantothenate from (R)-pantoate and beta-alanine: step 1/1. Catalyzes the condensation of pantoate with beta-alanine in an ATP-dependent reaction via a pantoyl-adenylate intermediate. The sequence is that of Pantothenate synthetase from Sphingopyxis alaskensis (strain DSM 13593 / LMG 18877 / RB2256) (Sphingomonas alaskensis).